Consider the following 226-residue polypeptide: Lipoprotein-releasing system ATP-binding protein LolD (226 aa).

One can recognise an ABC transporter domain in the interval 5-225 (FALSNISKFF…EINSCMLSSV (221 aa)). Residue 40–47 (GRSGSGKS) coordinates ATP.

Belongs to the ABC transporter superfamily. Lipoprotein translocase (TC 3.A.1.125) family. In terms of assembly, the complex is composed of two ATP-binding proteins (LolD) and two transmembrane proteins (LolC and LolE).

It is found in the cell inner membrane. Part of the ABC transporter complex LolCDE involved in the translocation of mature outer membrane-directed lipoproteins, from the inner membrane to the periplasmic chaperone, LolA. Responsible for the formation of the LolA-lipoprotein complex in an ATP-dependent manner. The sequence is that of Lipoprotein-releasing system ATP-binding protein LolD from Ehrlichia canis (strain Jake).